Consider the following 318-residue polypeptide: Olfactory receptor 2T34 (318 aa).

The Extracellular segment spans residues 1-30 (MCSGNQTSQNQTASTDFTLTGLFAESKHAA). Residues asparagine 5 and asparagine 10 are each glycosylated (N-linked (GlcNAc...) asparagine). Residues 31–54 (LLYTVTFLLFLMALTGNALLILLI) form a helical membrane-spanning segment. Over 55–62 (HSEPRLHT) the chain is Cytoplasmic. The chain crosses the membrane as a helical span at residues 63–84 (PMYFFISQLALMDLMYLCVTVP). Residues 85 to 105 (KMLVGQVTGDDTISPSGCGIQ) are Extracellular-facing. An intrachain disulfide couples cysteine 102 to cysteine 194. The chain crosses the membrane as a helical span at residues 106 to 125 (MFFHLTLAGAEVFLLAAMAY). Residues 126 to 144 (DRYAAVCRPLHYPLLMNQR) are Cytoplasmic-facing. The chain crosses the membrane as a helical span at residues 145-163 (VCQLLVSACWVLGMVDGLL). Residues 164 to 200 (LTPITMSFPFCQSRKILSFFCETPALLKLSCSDVSLY) lie on the Extracellular side of the membrane. The helical transmembrane segment at 201 to 224 (KMLTYLCCILMLLTPIMVISSSYT) threads the bilayer. The Cytoplasmic portion of the chain corresponds to 225–241 (LILHLIHRMNSAAGRRK). The chain crosses the membrane as a helical span at residues 242-264 (ALATCSSHMIIVLLLFGASFYTY). Topologically, residues 265–277 (MLRSSYHTAEQDM) are extracellular. Residues 278–297 (MVSAFYTIFTPVLNPLIYSL) traverse the membrane as a helical segment. At 298-318 (RNKDVTRALRSMMQSRMNQEK) the chain is on the cytoplasmic side.

This sequence belongs to the G-protein coupled receptor 1 family.

The protein resides in the cell membrane. In terms of biological role, odorant receptor. This Homo sapiens (Human) protein is Olfactory receptor 2T34 (OR2T34).